The chain runs to 670 residues: Zinc finger and BTB domain-containing protein 5 (670 aa).

One can recognise a BTB domain in the interval 24–93; it reads CDCVIVVGNR…MYTSTLMLGE (70 aa). 2 disordered regions span residues 158 to 256 and 268 to 382; these read LSSS…QEDG and EDAQ…SSTD. The span at 170–181 shows a compositional bias: polar residues; that stretch reads PMSSSMRSSLDQ. Ser-234 is modified (phosphoserine). Lys-239 participates in a covalent cross-link: Glycyl lysine isopeptide (Lys-Gly) (interchain with G-Cter in SUMO2). Residues 285–295 are compositionally biased toward polar residues; the sequence is SRATQVETSFE. Glycyl lysine isopeptide (Lys-Gly) (interchain with G-Cter in SUMO2) cross-links involve residues Lys-317 and Lys-325. Residues 345 to 360 show a composition bias toward low complexity; that stretch reads AEGSESVEVEGVVVSA. Positions 361-374 are enriched in basic and acidic residues; the sequence is EKIDLSPESSDRSF. Position 366 is a phosphoserine (Ser-366). Glycyl lysine isopeptide (Lys-Gly) (interchain with G-Cter in SUMO2) cross-links involve residues Lys-399 and Lys-410. A compositionally biased stretch (polar residues) spans 414–432; sequence SNFSASQSTDDNLPNTTSD. Disordered regions lie at residues 414–433 and 442–470; these read SNFS…TSDC and LLSP…EPAD. Positions 444-459 are enriched in low complexity; the sequence is SPEAGPAGGPSSAPGS. Residues Lys-535, Lys-587, and Lys-590 each participate in a glycyl lysine isopeptide (Lys-Gly) (interchain with G-Cter in SUMO2) cross-link. The C2H2-type 1 zinc-finger motif lies at 606–628; that stretch reads YACKICCKTFLTLTDCKKHIRVH. The C2H2-type 2; atypical zinc-finger motif lies at 634–657; sequence YACLKCGKRFSQSSHLYKHSKTTC. Residues Lys-638 and Lys-651 each participate in a glycyl lysine isopeptide (Lys-Gly) (interchain with G-Cter in SUMO2) cross-link.

The protein localises to the nucleus. In terms of biological role, may be involved in transcriptional regulation. In Mus musculus (Mouse), this protein is Zinc finger and BTB domain-containing protein 5 (Zbtb5).